The sequence spans 104 residues: uncharacterized protein (104 aa).

Residues 80 to 98 form a helical membrane-spanning segment; it reads GSSLPLFDLVFILLSTFFL.

The protein localises to the membrane. This is an uncharacterized protein from Saccharomyces cerevisiae (strain ATCC 204508 / S288c) (Baker's yeast).